The following is a 326-amino-acid chain: Aspartate carbamoyltransferase catalytic subunit (326 aa).

Carbamoyl phosphate contacts are provided by Arg58 and Thr59. Lys86 lines the L-aspartate pocket. Arg108, His141, and Gln144 together coordinate carbamoyl phosphate. 2 residues coordinate L-aspartate: Arg181 and Arg239. Residues Gly280 and Pro281 each coordinate carbamoyl phosphate.

Belongs to the aspartate/ornithine carbamoyltransferase superfamily. ATCase family. As to quaternary structure, heterododecamer (2C3:3R2) of six catalytic PyrB chains organized as two trimers (C3), and six regulatory PyrI chains organized as three dimers (R2).

The enzyme catalyses carbamoyl phosphate + L-aspartate = N-carbamoyl-L-aspartate + phosphate + H(+). The protein operates within pyrimidine metabolism; UMP biosynthesis via de novo pathway; (S)-dihydroorotate from bicarbonate: step 2/3. Catalyzes the condensation of carbamoyl phosphate and aspartate to form carbamoyl aspartate and inorganic phosphate, the committed step in the de novo pyrimidine nucleotide biosynthesis pathway. The chain is Aspartate carbamoyltransferase catalytic subunit from Synechococcus sp. (strain JA-2-3B'a(2-13)) (Cyanobacteria bacterium Yellowstone B-Prime).